The sequence spans 717 residues: Probable E3 ubiquitin-protein ligase WAVH2 (717 aa).

Polar residues-rich tracts occupy residues Val13–Thr28 and Arg85–Thr94. The tract at residues Val13–Gly120 is disordered. The segment covering Ser95–Ser117 has biased composition (low complexity). The segment at Cys140–Ser184 adopts an RING-type; atypical zinc-finger fold. The VWFA domain occupies Asp326–Val456.

Expressed in root tips, cotyledons, leaf primordia and hypocotyls.

It carries out the reaction S-ubiquitinyl-[E2 ubiquitin-conjugating enzyme]-L-cysteine + [acceptor protein]-L-lysine = [E2 ubiquitin-conjugating enzyme]-L-cysteine + N(6)-ubiquitinyl-[acceptor protein]-L-lysine.. Probable E3 ubiquitin-protein ligase involved in the regulation of root growth. Acts as a positive regulator of root gravitropism. The polypeptide is Probable E3 ubiquitin-protein ligase WAVH2 (Arabidopsis thaliana (Mouse-ear cress)).